Consider the following 438-residue polypeptide: 3-phosphoshikimate 1-carboxyvinyltransferase (438 aa).

3-phosphoshikimate contacts are provided by K26, S27, and R31. Position 26 (K26) interacts with phosphoenolpyruvate. Phosphoenolpyruvate-binding residues include G99 and R127. The 3-phosphoshikimate site is built by S170, S171, Q172, S199, E314, and H343. Q172 serves as a coordination point for phosphoenolpyruvate. E314 acts as the Proton acceptor in catalysis. 3 residues coordinate phosphoenolpyruvate: R347, R388, and K413.

This sequence belongs to the EPSP synthase family. As to quaternary structure, monomer.

It localises to the cytoplasm. The enzyme catalyses 3-phosphoshikimate + phosphoenolpyruvate = 5-O-(1-carboxyvinyl)-3-phosphoshikimate + phosphate. The protein operates within metabolic intermediate biosynthesis; chorismate biosynthesis; chorismate from D-erythrose 4-phosphate and phosphoenolpyruvate: step 6/7. In terms of biological role, catalyzes the transfer of the enolpyruvyl moiety of phosphoenolpyruvate (PEP) to the 5-hydroxyl of shikimate-3-phosphate (S3P) to produce enolpyruvyl shikimate-3-phosphate and inorganic phosphate. The protein is 3-phosphoshikimate 1-carboxyvinyltransferase of Mycobacterium sp. (strain JLS).